Consider the following 760-residue polypeptide: Metal transporter cnnm-2 (760 aa).

A signal peptide spans 1-21 (MIIKVFLRLLLLCAHIVCIDG). The Extracellular portion of the chain corresponds to 22-153 (KLEIRPVVSG…ETFMPVWAQC (132 aa)). An N-linked (GlcNAc...) asparagine glycan is attached at asparagine 88. The region spanning 145–323 (TFMPVWAQCA…MENDACDIDL (179 aa)) is the CNNM transmembrane domain. Residues 154–174 (AILCLLFSISALCSGLTLGLM) traverse the membrane as a helical segment. At 175-208 (ALTPQELSILMKSGSQREKKHAAAIYPIRCHGNR) the chain is on the cytoplasmic side. The chain crosses the membrane as a helical span at residues 209 to 229 (LLCTVIIMNVIVNTGITLLFD). Aspartate 230 is a topological domain (extracellular). Residues 231–251 (LAEGLIAFVASTVGIVVFGEI) form a helical membrane-spanning segment. The Cytoplasmic segment spans residues 252 to 261 (LPQSICVKYG). A helical membrane pass occupies residues 262–282 (LAVGANTIFITKFFMFLLFPI). The Extracellular portion of the chain corresponds to 283–760 (TWPLGKILDK…SVEELKPLME (478 aa)). N-linked (GlcNAc...) asparagine glycosylation is found at asparagine 302 and asparagine 403. CBS domains are found at residues 344 to 406 (MTDI…NITV) and 442 to 512 (MVAK…ITDE). N-linked (GlcNAc...) asparagine glycans are attached at residues asparagine 528, asparagine 592, and asparagine 667. The interval 708-734 (DDFGSPTRKASILDSSPNSRKRSSTSV) is disordered.

The protein belongs to the ACDP family.

It is found in the cell membrane. Probable metal transporter. Probably acts redundantly with the other metal transport proteins cnnm-1, cnnm-3, cnnm-4 and cnnm-5 to regulate Mg(2+) homeostasis. In Caenorhabditis elegans, this protein is Metal transporter cnnm-2.